The primary structure comprises 66 residues: Beta-toxin Chui3 (66 aa).

An LCN-type CS-alpha/beta domain is found at 1–66 (KEGYLVELGT…VWPLKNKTCR (66 aa)). 4 disulfide bridges follow: Cys-12-Cys-65, Cys-16-Cys-41, Cys-25-Cys-46, and Cys-29-Cys-48.

Belongs to the long (4 C-C) scorpion toxin superfamily. Sodium channel inhibitor family. Beta subfamily. Expressed by the venom gland.

The protein localises to the secreted. Beta toxins bind voltage-independently at site-4 of sodium channels (Nav) and shift the voltage of activation toward more negative potentials thereby affecting sodium channel activation and promoting spontaneous and repetitive firing. Acts on human sodium channel Nav1.6/SCN8A. This chain is Beta-toxin Chui3, found in Centruroides huichol (Scorpion).